We begin with the raw amino-acid sequence, 81 residues long: Conotoxin Vc6.7 (81 aa).

A signal peptide spans 1-19 (MEKLTILLLVAAVLMSIQA). A propeptide spanning residues 20–44 (VNQEKHQRAKMNLLSKRKPPAERWW) is cleaved from the precursor. 3 disulfides stabilise this stretch: cysteine 49–cysteine 63, cysteine 56–cysteine 67, and cysteine 62–cysteine 72.

The protein belongs to the conotoxin O2 superfamily. As to expression, expressed by the venom duct.

Its subcellular location is the secreted. Its function is as follows. Inhibits voltage-gated ion channels. The chain is Conotoxin Vc6.7 from Conus victoriae (Queen Victoria cone).